A 166-amino-acid polypeptide reads, in one-letter code: Lipoprotein signal peptidase (166 aa).

4 consecutive transmembrane segments (helical) span residues Ala9–Leu29, Ala45–Leu65, Trp71–Leu91, and Phe100–Val120. Residues Asp126 and Asp144 contribute to the active site. Residues Trp135–Val155 form a helical membrane-spanning segment.

This sequence belongs to the peptidase A8 family.

The protein resides in the cell inner membrane. It catalyses the reaction Release of signal peptides from bacterial membrane prolipoproteins. Hydrolyzes -Xaa-Yaa-Zaa-|-(S,diacylglyceryl)Cys-, in which Xaa is hydrophobic (preferably Leu), and Yaa (Ala or Ser) and Zaa (Gly or Ala) have small, neutral side chains.. It participates in protein modification; lipoprotein biosynthesis (signal peptide cleavage). This protein specifically catalyzes the removal of signal peptides from prolipoproteins. This chain is Lipoprotein signal peptidase, found in Burkholderia ambifaria (strain ATCC BAA-244 / DSM 16087 / CCUG 44356 / LMG 19182 / AMMD) (Burkholderia cepacia (strain AMMD)).